We begin with the raw amino-acid sequence, 369 residues long: Peptide chain release factor 2 (369 aa).

Glutamine 249 carries the N5-methylglutamine modification.

The protein belongs to the prokaryotic/mitochondrial release factor family. Methylated by PrmC. Methylation increases the termination efficiency of RF2.

Its subcellular location is the cytoplasm. Peptide chain release factor 2 directs the termination of translation in response to the peptide chain termination codons UGA and UAA. The polypeptide is Peptide chain release factor 2 (Thermosipho melanesiensis (strain DSM 12029 / CIP 104789 / BI429)).